We begin with the raw amino-acid sequence, 102 residues long: Small ribosomal subunit protein uS10 (102 aa).

It belongs to the universal ribosomal protein uS10 family. In terms of assembly, part of the 30S ribosomal subunit.

Its function is as follows. Involved in the binding of tRNA to the ribosomes. The sequence is that of Small ribosomal subunit protein uS10 from Clavibacter michiganensis subsp. michiganensis (strain NCPPB 382).